Consider the following 245-residue polypeptide: Uridylate kinase (245 aa).

Residue 12 to 15 participates in ATP binding; sequence KLSG. The tract at residues 20–25 is involved in allosteric activation by GTP; the sequence is GEKGVG. Gly54 contacts UMP. Residues Gly55 and Arg59 each coordinate ATP. UMP-binding positions include Asp74 and 135–142; that span reads VGSPYFST. 3 residues coordinate ATP: Asn163, Tyr169, and Asp172.

It belongs to the UMP kinase family. In terms of assembly, homohexamer.

The protein resides in the cytoplasm. It carries out the reaction UMP + ATP = UDP + ADP. It participates in pyrimidine metabolism; CTP biosynthesis via de novo pathway; UDP from UMP (UMPK route): step 1/1. Its activity is regulated as follows. Allosterically activated by GTP. Inhibited by UTP. In terms of biological role, catalyzes the reversible phosphorylation of UMP to UDP. The sequence is that of Uridylate kinase from Streptococcus mutans serotype c (strain ATCC 700610 / UA159).